The following is a 242-amino-acid chain: Putative prolyl 4-hydroxylase (242 aa).

The 111-residue stretch at 128-238 (NAEDLQVVRY…KWIANLWFRE (111 aa)) folds into the Fe2OG dioxygenase domain.

It belongs to the P4HA family. Fe cation is required as a cofactor. The cofactor is L-ascorbate.

The protein resides in the virion. It catalyses the reaction L-prolyl-[collagen] + 2-oxoglutarate + O2 = trans-4-hydroxy-L-prolyl-[collagen] + succinate + CO2. May catalyze the post-translational formation of 4-hydroxyproline in -Xaa-Pro-Gly- sequences in the 6 collagen-like proteins of Mimivirus. The protein is Putative prolyl 4-hydroxylase of Acanthamoeba polyphaga mimivirus (APMV).